A 196-amino-acid chain; its full sequence is Peptidyl-tRNA hydrolase (196 aa).

Y17 lines the tRNA pocket. The active-site Proton acceptor is the H22. The tRNA site is built by F68, N70, and N116.

Belongs to the PTH family. As to quaternary structure, monomer.

The protein localises to the cytoplasm. The enzyme catalyses an N-acyl-L-alpha-aminoacyl-tRNA + H2O = an N-acyl-L-amino acid + a tRNA + H(+). In terms of biological role, hydrolyzes ribosome-free peptidyl-tRNAs (with 1 or more amino acids incorporated), which drop off the ribosome during protein synthesis, or as a result of ribosome stalling. Catalyzes the release of premature peptidyl moieties from peptidyl-tRNA molecules trapped in stalled 50S ribosomal subunits, and thus maintains levels of free tRNAs and 50S ribosomes. In Photorhabdus laumondii subsp. laumondii (strain DSM 15139 / CIP 105565 / TT01) (Photorhabdus luminescens subsp. laumondii), this protein is Peptidyl-tRNA hydrolase.